We begin with the raw amino-acid sequence, 458 residues long: DNA repair protein RadA (458 aa).

Residues 10–27 form a C4-type zinc finger; that stretch reads CQSCGYESPKWMGKCPGC. 98-105 provides a ligand contact to ATP; that stretch reads GDPGIGKS. The RadA KNRFG motif motif lies at 255 to 259; the sequence is KNRFG. Residues 354-458 form a lon-protease-like region; sequence DAYLKVAGGV…AEALRTSLGG (105 aa).

The protein belongs to the RecA family. RadA subfamily. In terms of assembly, interacts with DisA.

Its function is as follows. DNA-dependent ATPase involved in processing of recombination intermediates, plays a role in repairing DNA breaks. Stimulates the branch migration of RecA-mediated strand transfer reactions, allowing the 3' invading strand to extend heteroduplex DNA faster. Binds ssDNA in the presence of ADP but not other nucleotides, has ATPase activity that is stimulated by ssDNA and various branched DNA structures, but inhibited by SSB. Does not have RecA's homology-searching function. Functionally, plays a role in DNA repair. Might stabilize or process Holliday junction intermediates. May work with DisA following methyl methanesulfonate (MMS) but not H(2)O(2) damage; DisA is a DNA integrity scanning protein with c-di-AMP synthase activity. This Bacillus subtilis (strain 168) protein is DNA repair protein RadA.